We begin with the raw amino-acid sequence, 203 residues long: MGVDKIKSKILDDAKAEANKIISEAEAEKAKILEKAKEEAEKRKAEILKKGEKEAEMTKSRIISEAKLEAKKKLLEAKEEIIEMAINKLKEELVKLPEQPEYKDKLIKLIKDGAISLGGGELIVRLNKRDMELIDDSTLWNLEKEVENATKKVTVLKKGEPVDIAGGCIIETADGLKSLDNSLEAIFNRNLNVIRARITEKLF.

This sequence belongs to the V-ATPase E subunit family. In terms of assembly, might form a homodimer. Interacts with subunit H via residues 41-60. The A-type ATPase is composed of subunits A(3), B(3), C, D, E(1 or 2), F, H(2), I and K(x).

The protein localises to the cell membrane. Functionally, component of the A-type ATP synthase that produces ATP from ADP in the presence of a proton gradient across the membrane. In Methanocaldococcus jannaschii (strain ATCC 43067 / DSM 2661 / JAL-1 / JCM 10045 / NBRC 100440) (Methanococcus jannaschii), this protein is A-type ATP synthase subunit E.